We begin with the raw amino-acid sequence, 49 residues long: U1-theraphotoxin-Lp1b (49 aa).

4 disulfides stabilise this stretch: cysteine 4-cysteine 17, cysteine 8-cysteine 41, cysteine 22-cysteine 24, and cysteine 35-cysteine 46.

Expressed by the venom gland.

The protein resides in the secreted. Functionally, toxin that causes irreversible contractile paralysis into adult Aedes aegypti resulting in 100% mortality after 24 hours. The sequence is that of U1-theraphotoxin-Lp1b from Lasiodora parahybana (Brazilian salmon pink birdeater).